A 129-amino-acid chain; its full sequence is Large ribosomal subunit protein bL32m (129 aa).

Residues M1–R63 constitute a mitochondrion transit peptide. The Zn(2+) site is built by C94, C97, C107, and C110.

This sequence belongs to the bacterial ribosomal protein bL32 family. As to quaternary structure, component of the mitochondrial large ribosomal subunit (mt-LSU). Mature N.crassa 74S mitochondrial ribosomes consist of a small (37S) and a large (54S) subunit. The 37S small subunit contains a 16S ribosomal RNA (16S mt-rRNA) and 32 different proteins. The 54S large subunit contains a 23S rRNA (23S mt-rRNA) and 42 different proteins. bL32m has a zinc binding site. MRPL32 precursor is processed by the m-AAA protease (composed of YTA12/RCA1 and YTA10/AFG3), which cleaves the N-terminal transit peptide. Cleavage by the m-AAA protease takes place prior to assembly into the large subunit, an essential step for mitochondrial ribosome (mitoribosome) assembly. Proper processing by the m-AAA protease is dependent on the zinc-binding region within the tightly folded C-terminal domain of MRPL32: zinc-dependent folding halts degradation initiated from the N-terminus and triggers the release of mature MRPL32.

It localises to the mitochondrion. Its function is as follows. Component of the mitochondrial ribosome (mitoribosome), a dedicated translation machinery responsible for the synthesis of mitochondrial genome-encoded proteins, including at least some of the essential transmembrane subunits of the mitochondrial respiratory chain. The mitoribosomes are attached to the mitochondrial inner membrane and translation products are cotranslationally integrated into the membrane. This chain is Large ribosomal subunit protein bL32m (mrpl32), found in Neurospora crassa (strain ATCC 24698 / 74-OR23-1A / CBS 708.71 / DSM 1257 / FGSC 987).